The chain runs to 490 residues: ATP synthase subunit beta, plastid (490 aa).

170–177 serves as a coordination point for ATP; the sequence is GGAGVGKT.

This sequence belongs to the ATPase alpha/beta chains family. As to quaternary structure, F-type ATPases have 2 components, CF(1) - the catalytic core - and CF(0) - the membrane proton channel. CF(1) has five subunits: alpha(3), beta(3), gamma(1), delta(1), epsilon(1). CF(0) has four main subunits: a(1), b(1), b'(1) and c(9-12).

It localises to the plastid thylakoid membrane. It carries out the reaction ATP + H2O + 4 H(+)(in) = ADP + phosphate + 5 H(+)(out). Produces ATP from ADP in the presence of a proton gradient across the membrane. The catalytic sites are hosted primarily by the beta subunits. The polypeptide is ATP synthase subunit beta, plastid (Cuscuta reflexa (Southern Asian dodder)).